Reading from the N-terminus, the 227-residue chain is MSSQGITLWPDTLAPREKLLRYGASALSDAELLAIFLRTGFPGVHVMQLAEQLLEQFGSLYHLMSADHSVFCSHKGLGNSSYSQLQAISELAFRFFSSHLAQENAMLNPRMTQHYLQSLLVHHEREVFLVLFLDNQHRVIRHQEMFAGTISSVVVYPREIVREALKANAAAIILAHNHPSGKAEPSHADRLITEQVVNACLLLEIRVLDHLVIGRGECVSFAERGWL.

The 123-residue stretch at 105–227 (AMLNPRMTQH…CVSFAERGWL (123 aa)) folds into the MPN domain. Zn(2+) is bound by residues His-176, His-178, and Asp-189. The JAMM motif motif lies at 176–189 (HNHPSGKAEPSHAD).

The protein belongs to the UPF0758 family. YicR subfamily.

This is UPF0758 protein Spro_4842 from Serratia proteamaculans (strain 568).